Here is a 226-residue protein sequence, read N- to C-terminus: Large ribosomal subunit protein uL1 (226 aa).

The protein belongs to the universal ribosomal protein uL1 family. As to quaternary structure, part of the 50S ribosomal subunit.

Functionally, binds directly to 23S rRNA. The L1 stalk is quite mobile in the ribosome, and is involved in E site tRNA release. Its function is as follows. Protein L1 is also a translational repressor protein, it controls the translation of the L11 operon by binding to its mRNA. The chain is Large ribosomal subunit protein uL1 from Treponema denticola (strain ATCC 35405 / DSM 14222 / CIP 103919 / JCM 8153 / KCTC 15104).